Here is a 183-residue protein sequence, read N- to C-terminus: Interleukin-36 beta (183 aa).

The propeptide occupies 1–30 (MMAFPPQSCVHVLPPKSIQMWEPNHNTMHG).

It belongs to the IL-1 family. Interacts with cargo receptor TMED10; the interaction mediates the translocation from the cytoplasm into the ERGIC (endoplasmic reticulum-Golgi intermediate compartment) and thereby secretion. N-terminal truncation leads to a dramatic enhancement of its activity (&gt;1000-fold).

The protein resides in the cytoplasm. The protein localises to the secreted. Cytokine that binds to and signals through the IL1RL2/IL-36R receptor which in turn activates NF-kappa-B and MAPK signaling pathways in target cells linked to a pro-inflammatory response. Part of the IL-36 signaling system that is thought to be present in epithelial barriers and to take part in local inflammatory response; similar to the IL-1 system with which it shares the coreceptor IL1RAP. Stimulates production of interleukin-6 and interleukin-8 in synovial fibrobasts, articular chondrocytes and mature adipocytes. Induces expression of a number of antimicrobial peptides including beta-defensin 4 and beta-defensin 103 as well as a number of matrix metalloproteases. Seems to be involved in skin inflammatory response by acting on keratinocytes, dendritic cells and indirectly on T-cells to drive tissue infiltration, cell maturation and cell proliferation. Induces the production of pro-inflammatory cytokines in bone marrow-derived dendritic cells (BMDCs), including IL-12, Il-1 beta, IL-6, TNF-alpha and IL-23, and activates p38 MAPK phosphorylation in BMDCs. Involved in dendritic cell maturation by stimulating the surface expression of CD80, CD86 and MHC class II. Induces the production of IFN-gamma, IL-4 and IL-17 by T-helper 1 (Th1) cells, cultured CD4(+) T-cells and splenocytes. This is Interleukin-36 beta from Mus musculus (Mouse).